The primary structure comprises 113 residues: uncharacterized protein (113 aa).

The N-terminal stretch at 1–16 (MKCLVVLTALFGISTA) is a signal peptide. Positions 81 to 101 (GGNGGNGGGGNGGNNGNGNGN) are enriched in gly residues. A disordered region spans residues 81-103 (GGNGGNGGGGNGGNNGNGNGNNG).

As to expression, nacreous layer of shell (at protein level).

Its subcellular location is the secreted. This is an uncharacterized protein from Margaritifera margaritifera (Freshwater pearl mussel).